Here is a 106-residue protein sequence, read N- to C-terminus: Large ribosomal subunit protein eL42 (106 aa).

This sequence belongs to the eukaryotic ribosomal protein eL42 family.

The chain is Large ribosomal subunit protein eL42 (RPL44) from Wickerhamomyces ciferrii (strain ATCC 14091 / BCRC 22168 / CBS 111 / JCM 3599 / NBRC 0793 / NRRL Y-1031 F-60-10) (Yeast).